The following is a 365-amino-acid chain: tRNA N6-adenosine threonylcarbamoyltransferase (365 aa).

Fe cation is bound by residues His-119 and His-123. Substrate-binding positions include 141-145 (LVSGG), Asp-174, Gly-187, and Asn-288. Asp-316 serves as a coordination point for Fe cation.

It belongs to the KAE1 / TsaD family. Fe(2+) serves as cofactor.

Its subcellular location is the cytoplasm. It carries out the reaction L-threonylcarbamoyladenylate + adenosine(37) in tRNA = N(6)-L-threonylcarbamoyladenosine(37) in tRNA + AMP + H(+). In terms of biological role, required for the formation of a threonylcarbamoyl group on adenosine at position 37 (t(6)A37) in tRNAs that read codons beginning with adenine. Is involved in the transfer of the threonylcarbamoyl moiety of threonylcarbamoyl-AMP (TC-AMP) to the N6 group of A37, together with TsaE and TsaB. TsaD likely plays a direct catalytic role in this reaction. This is tRNA N6-adenosine threonylcarbamoyltransferase from Rhizobium etli (strain CIAT 652).